The chain runs to 533 residues: Adenylate kinase 7 (533 aa).

An adenylate kinase region spans residues Pro177–Glu426. Ala187–Ser192 is an ATP binding site. Residues Gln207 to Leu265 are NMP. AMP contacts are provided by residues Glu242 to Leu265, Gly292 to Lys295, and Gln299. The segment at Asn347 to His357 is LID. Arg365 contacts AMP. An ATP-binding site is contributed by Gly397. The stretch at Arg419–Ser487 forms a coiled coil. The tract at residues Pro489–Gln533 is DPY-30.

It in the central section; belongs to the adenylate kinase family. This sequence in the C-terminal section; belongs to the dpy-30 family.

The protein resides in the cytoplasm. The protein localises to the cytosol. It is found in the cell projection. Its subcellular location is the cilium. It localises to the flagellum. It carries out the reaction AMP + ATP = 2 ADP. The enzyme catalyses a 2'-deoxyribonucleoside 5'-diphosphate + ATP = a 2'-deoxyribonucleoside 5'-triphosphate + ADP. The catalysed reaction is a ribonucleoside 5'-diphosphate + ATP = a ribonucleoside 5'-triphosphate + ADP. Functionally, nucleoside monophosphate (NMP) kinase that catalyzes the reversible transfer of the terminal phosphate group between nucleoside triphosphates and monophosphates. Has highest activity toward AMP, and weaker activity toward dAMP, CMP and dCMP. Also displays broad nucleoside diphosphate kinase activity. Involved in maintaining ciliary structure and function. In Macaca fascicularis (Crab-eating macaque), this protein is Adenylate kinase 7 (AK7).